The sequence spans 138 residues: Endonuclease V (138 aa).

T2 acts as the Nucleophile; via amide nitrogen in catalysis. E23 (proton acceptor) is an active-site residue.

As to quaternary structure, monomer.

It catalyses the reaction Cleaves the N-glycosidic bond between the 5'-pyrimidine residue in cyclobutadipyrimidine (in DNA) and the corresponding deoxy-D-ribose residue.. The enzyme catalyses 2'-deoxyribonucleotide-(2'-deoxyribose 5'-phosphate)-2'-deoxyribonucleotide-DNA = a 3'-end 2'-deoxyribonucleotide-(2,3-dehydro-2,3-deoxyribose 5'-phosphate)-DNA + a 5'-end 5'-phospho-2'-deoxyribonucleoside-DNA + H(+). Functionally, participates in the repair of UV-damaged DNA by excising pyrimidine dimers that are the major UV-lesions. DNA glycosylase activity hydrolyzes the glycosylic bond of the 5' pyrimidine of the dimer. This leaves apurinic/apyrimidic (AP) sites in the DNA. These AP sites are removed by the AP lyase activity which cleaves the intrapyrimidine phosphodiester bond. Catalysis proceeds via a protonated imine covalent intermediate between the alpha-amino group of the N-terminal threonine residue and the C1' of the deoxyribose sugar of the 5' pyrimidine at the dimer site. This Enterobacteria phage T4 (Bacteriophage T4) protein is Endonuclease V.